Consider the following 34-residue polypeptide: Photosystem II reaction center protein M (34 aa).

The helical transmembrane segment at 5–25 (ILAFIATALFILIPTAFSLIL) threads the bilayer.

It belongs to the PsbM family. As to quaternary structure, PSII is composed of 1 copy each of membrane proteins PsbA, PsbB, PsbC, PsbD, PsbE, PsbF, PsbH, PsbI, PsbJ, PsbK, PsbL, PsbM, PsbT, PsbX, PsbY, PsbZ, Psb30/Ycf12, at least 3 peripheral proteins of the oxygen-evolving complex and a large number of cofactors. It forms dimeric complexes.

It localises to the plastid. The protein resides in the chloroplast thylakoid membrane. Its function is as follows. One of the components of the core complex of photosystem II (PSII). PSII is a light-driven water:plastoquinone oxidoreductase that uses light energy to abstract electrons from H(2)O, generating O(2) and a proton gradient subsequently used for ATP formation. It consists of a core antenna complex that captures photons, and an electron transfer chain that converts photonic excitation into a charge separation. This subunit is found at the monomer-monomer interface. This chain is Photosystem II reaction center protein M, found in Huperzia lucidula (Shining clubmoss).